Here is a 947-residue protein sequence, read N- to C-terminus: Protein translocase subunit SecA 1 (947 aa).

Residues Gln87, 105-109 (GEGKT), and Asp525 each bind ATP. A disordered region spans residues 907–937 (DDADKAARDPNRPETWGKVGRNEDCPCNSGK). Over residues 908–918 (DADKAARDPNR) the composition is skewed to basic and acidic residues. 4 residues coordinate Zn(2+): Cys931, Cys933, Cys942, and His943.

Belongs to the SecA family. As to quaternary structure, monomer and homodimer. Part of the essential Sec protein translocation apparatus which comprises SecA, SecYEG and auxiliary proteins SecDF-YajC and YidC. The cofactor is Zn(2+).

The protein localises to the cell inner membrane. Its subcellular location is the cytoplasm. The catalysed reaction is ATP + H2O + cellular proteinSide 1 = ADP + phosphate + cellular proteinSide 2.. Part of the Sec protein translocase complex. Interacts with the SecYEG preprotein conducting channel. Has a central role in coupling the hydrolysis of ATP to the transfer of proteins into and across the cell membrane, serving both as a receptor for the preprotein-SecB complex and as an ATP-driven molecular motor driving the stepwise translocation of polypeptide chains across the membrane. The sequence is that of Protein translocase subunit SecA 1 from Rhodopseudomonas palustris (strain BisA53).